Consider the following 272-residue polypeptide: Tryptophan synthase alpha chain (272 aa).

Active-site proton acceptor residues include glutamate 49 and glutamate 60.

The protein belongs to the TrpA family. Tetramer of two alpha and two beta chains.

It carries out the reaction (1S,2R)-1-C-(indol-3-yl)glycerol 3-phosphate + L-serine = D-glyceraldehyde 3-phosphate + L-tryptophan + H2O. It participates in amino-acid biosynthesis; L-tryptophan biosynthesis; L-tryptophan from chorismate: step 5/5. Functionally, the alpha subunit is responsible for the aldol cleavage of indoleglycerol phosphate to indole and glyceraldehyde 3-phosphate. The chain is Tryptophan synthase alpha chain from Legionella pneumophila (strain Lens).